Here is a 211-residue protein sequence, read N- to C-terminus: Large ribosomal subunit protein bL25 (211 aa).

Belongs to the bacterial ribosomal protein bL25 family. CTC subfamily. As to quaternary structure, part of the 50S ribosomal subunit; part of the 5S rRNA/L5/L18/L25 subcomplex. Contacts the 5S rRNA. Binds to the 5S rRNA independently of L5 and L18.

Functionally, this is one of the proteins that binds to the 5S RNA in the ribosome where it forms part of the central protuberance. This is Large ribosomal subunit protein bL25 from Xanthomonas axonopodis pv. citri (strain 306).